Consider the following 71-residue polypeptide: Putative membrane protein insertion efficiency factor (71 aa).

The protein belongs to the UPF0161 family.

It localises to the cell inner membrane. In terms of biological role, could be involved in insertion of integral membrane proteins into the membrane. This chain is Putative membrane protein insertion efficiency factor, found in Nitrosospira multiformis (strain ATCC 25196 / NCIMB 11849 / C 71).